The primary structure comprises 218 residues: Thiamine-phosphate synthase (218 aa).

Residues Gln46–Lys50 and Asp83 contribute to the 4-amino-2-methyl-5-(diphosphooxymethyl)pyrimidine site. Positions 84 and 103 each coordinate Mg(2+). Ser122 is a binding site for 4-amino-2-methyl-5-(diphosphooxymethyl)pyrimidine. Residue Thr149–Ser151 coordinates 2-[(2R,5Z)-2-carboxy-4-methylthiazol-5(2H)-ylidene]ethyl phosphate. Lys152 lines the 4-amino-2-methyl-5-(diphosphooxymethyl)pyrimidine pocket. 2-[(2R,5Z)-2-carboxy-4-methylthiazol-5(2H)-ylidene]ethyl phosphate-binding positions include Gly181 and Ile201 to Thr202.

The protein belongs to the thiamine-phosphate synthase family. Requires Mg(2+) as cofactor.

The catalysed reaction is 2-[(2R,5Z)-2-carboxy-4-methylthiazol-5(2H)-ylidene]ethyl phosphate + 4-amino-2-methyl-5-(diphosphooxymethyl)pyrimidine + 2 H(+) = thiamine phosphate + CO2 + diphosphate. The enzyme catalyses 2-(2-carboxy-4-methylthiazol-5-yl)ethyl phosphate + 4-amino-2-methyl-5-(diphosphooxymethyl)pyrimidine + 2 H(+) = thiamine phosphate + CO2 + diphosphate. It carries out the reaction 4-methyl-5-(2-phosphooxyethyl)-thiazole + 4-amino-2-methyl-5-(diphosphooxymethyl)pyrimidine + H(+) = thiamine phosphate + diphosphate. The protein operates within cofactor biosynthesis; thiamine diphosphate biosynthesis; thiamine phosphate from 4-amino-2-methyl-5-diphosphomethylpyrimidine and 4-methyl-5-(2-phosphoethyl)-thiazole: step 1/1. Functionally, condenses 4-methyl-5-(beta-hydroxyethyl)thiazole monophosphate (THZ-P) and 2-methyl-4-amino-5-hydroxymethyl pyrimidine pyrophosphate (HMP-PP) to form thiamine monophosphate (TMP). The polypeptide is Thiamine-phosphate synthase (Actinobacillus pleuropneumoniae serotype 7 (strain AP76)).